A 356-amino-acid polypeptide reads, in one-letter code: ATP-dependent 6-phosphofructokinase (356 aa).

Residues glycine 15, 78–79 (KG), and 115–118 (GEGT) each bind ATP. Glutamate 116 is a Mg(2+) binding site. Substrate is bound by residues 138 to 140 (TID), arginine 175, 182 to 184 (MGR), glutamate 235, arginine 272, and 278 to 281 (HLQR). The active-site Proton acceptor is the aspartate 140.

It belongs to the phosphofructokinase type A (PFKA) family. Mixed-substrate PFK group III subfamily. In terms of assembly, homodimer or homotetramer. The cofactor is Mg(2+).

It localises to the cytoplasm. The enzyme catalyses beta-D-fructose 6-phosphate + ATP = beta-D-fructose 1,6-bisphosphate + ADP + H(+). It participates in carbohydrate degradation; glycolysis; D-glyceraldehyde 3-phosphate and glycerone phosphate from D-glucose: step 3/4. Catalyzes the phosphorylation of D-fructose 6-phosphate to fructose 1,6-bisphosphate by ATP, the first committing step of glycolysis. The chain is ATP-dependent 6-phosphofructokinase from Chloroflexus aurantiacus (strain ATCC 29366 / DSM 635 / J-10-fl).